We begin with the raw amino-acid sequence, 155 residues long: 2-C-methyl-D-erythritol 2,4-cyclodiphosphate synthase (155 aa).

Residues D8 and H10 each coordinate a divalent metal cation. Residues D8–H10 and H34–S35 each bind 4-CDP-2-C-methyl-D-erythritol 2-phosphate. H42 provides a ligand contact to a divalent metal cation. Residues D56 to G58, F61 to D65, T132 to E135, F139, and R142 contribute to the 4-CDP-2-C-methyl-D-erythritol 2-phosphate site.

It belongs to the IspF family. In terms of assembly, homotrimer. A divalent metal cation serves as cofactor.

It carries out the reaction 4-CDP-2-C-methyl-D-erythritol 2-phosphate = 2-C-methyl-D-erythritol 2,4-cyclic diphosphate + CMP. Its pathway is isoprenoid biosynthesis; isopentenyl diphosphate biosynthesis via DXP pathway; isopentenyl diphosphate from 1-deoxy-D-xylulose 5-phosphate: step 4/6. Its function is as follows. Involved in the biosynthesis of isopentenyl diphosphate (IPP) and dimethylallyl diphosphate (DMAPP), two major building blocks of isoprenoid compounds. Catalyzes the conversion of 4-diphosphocytidyl-2-C-methyl-D-erythritol 2-phosphate (CDP-ME2P) to 2-C-methyl-D-erythritol 2,4-cyclodiphosphate (ME-CPP) with a corresponding release of cytidine 5-monophosphate (CMP). This is 2-C-methyl-D-erythritol 2,4-cyclodiphosphate synthase from Clostridium acetobutylicum (strain ATCC 824 / DSM 792 / JCM 1419 / IAM 19013 / LMG 5710 / NBRC 13948 / NRRL B-527 / VKM B-1787 / 2291 / W).